A 495-amino-acid polypeptide reads, in one-letter code: Glycerol kinase (495 aa).

Thr-11 contributes to the ADP binding site. ATP is bound by residues Thr-11, Thr-12, and Ser-13. Thr-11 serves as a coordination point for sn-glycerol 3-phosphate. 4 residues coordinate sn-glycerol 3-phosphate: Arg-81, Glu-82, Tyr-133, and Asp-242. Glycerol contacts are provided by Arg-81, Glu-82, Tyr-133, Asp-242, and Gln-243. Thr-264, Gly-307, Gly-407, and Asn-411 together coordinate ADP. The ATP site is built by Thr-264, Gly-307, and Gly-407.

It belongs to the FGGY kinase family.

The catalysed reaction is glycerol + ATP = sn-glycerol 3-phosphate + ADP + H(+). It functions in the pathway polyol metabolism; glycerol degradation via glycerol kinase pathway; sn-glycerol 3-phosphate from glycerol: step 1/1. Its activity is regulated as follows. Inhibited by fructose 1,6-bisphosphate (FBP). Key enzyme in the regulation of glycerol uptake and metabolism. Catalyzes the phosphorylation of glycerol to yield sn-glycerol 3-phosphate. The polypeptide is Glycerol kinase (Thermus brockianus).